The following is a 75-amino-acid chain: MGSIRPFNVKRTAEEIAEKYPSLFTEKFEENKRKLEKMMPDVSKRTINIISGYLTRYVVKKKEKAEREIEENAAS.

This sequence belongs to the eukaryotic ribosomal protein eS17 family.

The chain is Small ribosomal subunit protein eS17 from Thermoplasma volcanium (strain ATCC 51530 / DSM 4299 / JCM 9571 / NBRC 15438 / GSS1).